The primary structure comprises 630 residues: Putative polypeptide N-acetylgalactosaminyltransferase 10 (630 aa).

At 1-6 (MNVDLR) the chain is on the cytoplasmic side. A helical; Signal-anchor for type II membrane protein membrane pass occupies residues 7–26 (LIVRLLLAILLTSLVTTILM). Over 27-630 (GKQIHRRLVK…APYDPQREPH (604 aa)) the chain is Lumenal. N-linked (GlcNAc...) asparagine glycans are attached at residues Asn-72, Asn-84, Asn-146, and Asn-168. Cystine bridges form between Cys-157-Cys-386, Cys-377-Cys-456, and Cys-496-Cys-513. Residues 166–277 (LPNVTVIIAF…TNWLPPLLEP (112 aa)) are catalytic subdomain A. Positions 207 and 238 each coordinate substrate. Asp-261 contacts Mn(2+). Ser-262 is a binding site for substrate. A Mn(2+)-binding site is contributed by His-263. Residues 333–394 (PYRTPVLSGA…PCARVGHIGK (62 aa)) form a catalytic subdomain B region. Trp-363 serves as a coordination point for substrate. Position 391 (His-391) interacts with Mn(2+). One can recognise a Ricin B-type lectin domain in the interval 483 to 618 (FSGVIESVAF…NQLEQQWKVG (136 aa)). The N-linked (GlcNAc...) asparagine glycan is linked to Asn-525. Cystine bridges form between Cys-543–Cys-559 and Cys-586–Cys-606.

It belongs to the glycosyltransferase 2 family. GalNAc-T subfamily. Requires Mn(2+) as cofactor. In terms of tissue distribution, during embryonic stages 9-11, weakly expressed in the mesoderm. During embryonic stages 12-13, very weak expression is observed in the somatic mesoderm region. No expression detected from stage 14-15. During embryonic stages 16-17, expressed in the epidermis and the antennomaxillary complex. In third instar larvae, expressed ubiquitously in wing, eye-antennal, leg and haltere imaginal disks.

It is found in the golgi apparatus membrane. It catalyses the reaction L-seryl-[protein] + UDP-N-acetyl-alpha-D-galactosamine = a 3-O-[N-acetyl-alpha-D-galactosaminyl]-L-seryl-[protein] + UDP + H(+). It carries out the reaction L-threonyl-[protein] + UDP-N-acetyl-alpha-D-galactosamine = a 3-O-[N-acetyl-alpha-D-galactosaminyl]-L-threonyl-[protein] + UDP + H(+). Its pathway is protein modification; protein glycosylation. Functionally, may catalyze the initial reaction in O-linked oligosaccharide biosynthesis, the transfer of an N-acetyl-D-galactosamine residue to a serine or threonine residue on the protein receptor. The sequence is that of Putative polypeptide N-acetylgalactosaminyltransferase 10 (pgant10) from Drosophila melanogaster (Fruit fly).